The chain runs to 493 residues: Tripartite motif-containing protein 5 (493 aa).

Residue Ala-2 is modified to N-acetylalanine. An RING-type zinc finger spans residues 15-59 (CPICLELLTQPLSLDCGHSFCQACLTANHKKSMLDKGESSCPVCR). Ser-86 is subject to Phosphoserine. The segment at 90 to 132 (QKVDHCAHHGEKLLLFCQEDGKVICWLCERSQEHRGHHTFLTE) adopts a B box-type zinc-finger fold. Positions 95, 98, 117, and 123 each coordinate Zn(2+). Residues 131-240 (TEEVAREYQV…LISDLERRLQ (110 aa)) adopt a coiled-coil conformation. Residues 185–198 (FEQLRDILDWEESN) form a required for interaction with GABARAP and for autophagy region. A B30.2/SPRY domain is found at 281–493 (LKGMLEVFRE…VPMTLCSPSS (213 aa)).

Belongs to the TRIM/RBCC family. Can form homodimers and homotrimers. In addition to lower-order dimerization, also exhibits a higher-order multimerization and both low- and high-order multimerizations are essential for its restriction activity. Interacts with BTBD1 and BTBD2. Interacts with PSMC4, PSMC5, PSMD7 and HSPA8/HSC70. Interacts (via B30.2/SPRY domain) with HSPA1A/B. Interacts with PSMC2, MAP3K7/TAK1, TAB2 and TAB3. Interacts with SQSTM1. Interacts with TRIM6 and TRIM34. Interacts with ULK1 (phosphorylated form), GABARAP, GABARAPL1, GABARAPL2, MAP1LC3A, MAP1LC3C and BECN1. Post-translationally, degraded in a proteasome-independent fashion in the absence of viral infection but in a proteasome-dependent fashion following exposure to restriction sensitive virus. Autoubiquitinated in a RING finger- and UBE2D2-dependent manner. Monoubiquitinated by TRIM21. Deubiquitinated by Yersinia YopJ. Ubiquitination may not lead to proteasomal degradation.

Its subcellular location is the cytoplasm. The protein resides in the nucleus. The catalysed reaction is S-ubiquitinyl-[E2 ubiquitin-conjugating enzyme]-L-cysteine + [acceptor protein]-L-lysine = [E2 ubiquitin-conjugating enzyme]-L-cysteine + N(6)-ubiquitinyl-[acceptor protein]-L-lysine.. It functions in the pathway protein modification; protein ubiquitination. Functionally, capsid-specific restriction factor that prevents infection from non-host-adapted retroviruses. Blocks viral replication early in the life cycle, after viral entry but before reverse transcription. In addition to acting as a capsid-specific restriction factor, also acts as a pattern recognition receptor that activates innate immune signaling in response to the retroviral capsid lattice. Binding to the viral capsid triggers its E3 ubiquitin ligase activity, and in concert with the heterodimeric ubiquitin conjugating enzyme complex UBE2V1-UBE2N (also known as UBC13-UEV1A complex) generates 'Lys-63'-linked polyubiquitin chains, which in turn are catalysts in the autophosphorylation of the MAP3K7/TAK1 complex (includes TAK1, TAB2, and TAB3). Activation of the MAP3K7/TAK1 complex by autophosphorylation results in the induction and expression of NF-kappa-B and MAPK-responsive inflammatory genes, thereby leading to an innate immune response in the infected cell. Plays a role in regulating autophagy through activation of autophagy regulator BECN1 by causing its dissociation from its inhibitors BCL2 and TAB2. The polypeptide is Tripartite motif-containing protein 5 (TRIM5) (Pan troglodytes (Chimpanzee)).